A 399-amino-acid chain; its full sequence is Tyrosine--tRNA ligase 2 (399 aa).

The short motif at 42–51 is the 'HIGH' region element; that stretch reads PTAPDLHLGH. A 'KMSKS' region motif is present at residues 226-230; that stretch reads KMSKS. Position 229 (Lys229) interacts with ATP. Positions 336 to 396 constitute an S4 RNA-binding domain; that stretch reads MPVASVLNKA…GKKAFARITL (61 aa).

It belongs to the class-I aminoacyl-tRNA synthetase family. TyrS type 2 subfamily. As to quaternary structure, homodimer.

It localises to the cytoplasm. It carries out the reaction tRNA(Tyr) + L-tyrosine + ATP = L-tyrosyl-tRNA(Tyr) + AMP + diphosphate + H(+). Functionally, catalyzes the attachment of tyrosine to tRNA(Tyr) in a two-step reaction: tyrosine is first activated by ATP to form Tyr-AMP and then transferred to the acceptor end of tRNA(Tyr). The sequence is that of Tyrosine--tRNA ligase 2 from Pseudomonas aeruginosa (strain ATCC 15692 / DSM 22644 / CIP 104116 / JCM 14847 / LMG 12228 / 1C / PRS 101 / PAO1).